The sequence spans 179 residues: ATP-dependent protease subunit HslV (179 aa).

Threonine 7 is an active-site residue. 3 residues coordinate Na(+): glycine 162, cysteine 165, and threonine 168.

The protein belongs to the peptidase T1B family. HslV subfamily. A double ring-shaped homohexamer of HslV is capped on each side by a ring-shaped HslU homohexamer. The assembly of the HslU/HslV complex is dependent on binding of ATP.

The protein resides in the cytoplasm. It catalyses the reaction ATP-dependent cleavage of peptide bonds with broad specificity.. Allosterically activated by HslU binding. Protease subunit of a proteasome-like degradation complex believed to be a general protein degrading machinery. The protein is ATP-dependent protease subunit HslV of Bordetella bronchiseptica (strain ATCC BAA-588 / NCTC 13252 / RB50) (Alcaligenes bronchisepticus).